Consider the following 62-residue polypeptide: Alkaline proteinase (62 aa).

In terms of domain architecture, Peptidase S8 spans 1–62 (GSTSYIYDTS…FAPGTSVLSS (62 aa)). Aspartate 21 functions as the Charge relay system in the catalytic mechanism.

It localises to the secreted. Its activity is regulated as follows. Inhibited by phenylmethanesulfonyl fluoride (PMSF) and chymostatin (CST), but not by Bowman-Birk type trypsin-chymotrypsin inhibitor (BBI). Its function is as follows. Serine protease. May be involved in the invasion of grains and hydrolysis of grain proteins. This is Alkaline proteinase from Fusarium culmorum.